Here is a 572-residue protein sequence, read N- to C-terminus: Proline--tRNA ligase (572 aa).

Belongs to the class-II aminoacyl-tRNA synthetase family. ProS type 1 subfamily. As to quaternary structure, homodimer.

It localises to the cytoplasm. It carries out the reaction tRNA(Pro) + L-proline + ATP = L-prolyl-tRNA(Pro) + AMP + diphosphate. Its function is as follows. Catalyzes the attachment of proline to tRNA(Pro) in a two-step reaction: proline is first activated by ATP to form Pro-AMP and then transferred to the acceptor end of tRNA(Pro). As ProRS can inadvertently accommodate and process non-cognate amino acids such as alanine and cysteine, to avoid such errors it has two additional distinct editing activities against alanine. One activity is designated as 'pretransfer' editing and involves the tRNA(Pro)-independent hydrolysis of activated Ala-AMP. The other activity is designated 'posttransfer' editing and involves deacylation of mischarged Ala-tRNA(Pro). The misacylated Cys-tRNA(Pro) is not edited by ProRS. The protein is Proline--tRNA ligase of Shewanella amazonensis (strain ATCC BAA-1098 / SB2B).